The following is a 326-amino-acid chain: Aspartate carbamoyltransferase catalytic subunit (326 aa).

Carbamoyl phosphate is bound by residues arginine 55 and threonine 56. Lysine 83 lines the L-aspartate pocket. Residues arginine 105, histidine 135, and glutamine 138 each coordinate carbamoyl phosphate. L-aspartate-binding residues include arginine 176 and arginine 230. Carbamoyl phosphate is bound by residues glycine 271 and proline 272.

This sequence belongs to the aspartate/ornithine carbamoyltransferase superfamily. ATCase family. As to quaternary structure, heterododecamer (2C3:3R2) of six catalytic PyrB chains organized as two trimers (C3), and six regulatory PyrI chains organized as three dimers (R2).

The enzyme catalyses carbamoyl phosphate + L-aspartate = N-carbamoyl-L-aspartate + phosphate + H(+). Its pathway is pyrimidine metabolism; UMP biosynthesis via de novo pathway; (S)-dihydroorotate from bicarbonate: step 2/3. Catalyzes the condensation of carbamoyl phosphate and aspartate to form carbamoyl aspartate and inorganic phosphate, the committed step in the de novo pyrimidine nucleotide biosynthesis pathway. In Streptomyces coelicolor (strain ATCC BAA-471 / A3(2) / M145), this protein is Aspartate carbamoyltransferase catalytic subunit.